The chain runs to 36 residues: Photosystem I reaction center subunit VIII (36 aa).

A helical transmembrane segment spans residues 9-29 (ILVPLVGLVFPAITMVSLFLY).

This sequence belongs to the PsaI family.

It is found in the plastid. The protein localises to the chloroplast thylakoid membrane. Functionally, may help in the organization of the PsaL subunit. This is Photosystem I reaction center subunit VIII from Zygnema circumcarinatum (Green alga).